Reading from the N-terminus, the 493-residue chain is Argininosuccinate lyase (493 aa).

It belongs to the lyase 1 family. Argininosuccinate lyase subfamily.

Its subcellular location is the cytoplasm. It carries out the reaction 2-(N(omega)-L-arginino)succinate = fumarate + L-arginine. The protein operates within amino-acid biosynthesis; L-arginine biosynthesis; L-arginine from L-ornithine and carbamoyl phosphate: step 3/3. The sequence is that of Argininosuccinate lyase from Methanospirillum hungatei JF-1 (strain ATCC 27890 / DSM 864 / NBRC 100397 / JF-1).